Consider the following 192-residue polypeptide: ATP synthase protein MI25 (192 aa).

Residues 29 to 49 (ILIYNEEMIVALCFIGFIIFS) traverse the membrane as a helical segment.

Belongs to the ATPase protein MI25 family. In terms of assembly, F-type ATPases have 2 components, CF(1) - the catalytic core - and CF(0) - the membrane proton channel. CF(1) has five subunits: alpha(3), beta(3), gamma(1), delta(1), epsilon(1). CF(0) has three main subunits: a, b and c.

The protein localises to the mitochondrion membrane. Functionally, this is one of the chains of the nonenzymatic component (CF(0) subunit) of the mitochondrial ATPase complex. The sequence is that of ATP synthase protein MI25 (ATP4) from Arabidopsis thaliana (Mouse-ear cress).